We begin with the raw amino-acid sequence, 30 residues long: Photosystem I reaction center subunit XII (30 aa).

A helical membrane pass occupies residues 7–26 (IMVALFAALFTGILALRLGT).

Belongs to the PsaM family.

The protein localises to the plastid. The protein resides in the chloroplast thylakoid membrane. The chain is Photosystem I reaction center subunit XII from Mesostigma viride (Green alga).